Reading from the N-terminus, the 318-residue chain is Small ribosomal subunit protein uS3 (318 aa).

In terms of domain architecture, KH type-2 spans 17 to 86 (MDEYFAEQLS…NPQIDAQEVK (70 aa)). Basic and acidic residues predominate over residues 198 to 229 (SVEVEEPAEKPAEKPAEKPAEKAAAPKKEAAK). The interval 198–275 (SVEVEEPAEK…VQAETSEEIE (78 aa)) is disordered. Pro residues predominate over residues 234–250 (APAPEAPAPAPEAPAPA). Residues 253–275 (EEAEVAEPEEAEEVQAETSEEIE) are compositionally biased toward acidic residues.

Belongs to the universal ribosomal protein uS3 family. In terms of assembly, part of the 30S ribosomal subunit.

Its function is as follows. Binds the lower part of the 30S subunit head. The polypeptide is Small ribosomal subunit protein uS3 (Methanosarcina acetivorans (strain ATCC 35395 / DSM 2834 / JCM 12185 / C2A)).